A 245-amino-acid polypeptide reads, in one-letter code: tRNA pseudouridine synthase A (245 aa).

The active-site Nucleophile is D52. Residue Y111 coordinates substrate.

The protein belongs to the tRNA pseudouridine synthase TruA family. In terms of assembly, homodimer.

The catalysed reaction is uridine(38/39/40) in tRNA = pseudouridine(38/39/40) in tRNA. Formation of pseudouridine at positions 38, 39 and 40 in the anticodon stem and loop of transfer RNAs. The chain is tRNA pseudouridine synthase A from Rickettsia bellii (strain RML369-C).